The chain runs to 138 residues: Translation initiation factor 5A (138 aa).

Residue Lys37 is modified to Hypusine.

This sequence belongs to the eIF-5A family.

It is found in the cytoplasm. In terms of biological role, functions by promoting the formation of the first peptide bond. This chain is Translation initiation factor 5A (eIF5A), found in Thermococcus sibiricus (strain DSM 12597 / MM 739).